A 286-amino-acid chain; its full sequence is ATP synthase gamma chain (286 aa).

This sequence belongs to the ATPase gamma chain family. As to quaternary structure, F-type ATPases have 2 components, CF(1) - the catalytic core - and CF(0) - the membrane proton channel. CF(1) has five subunits: alpha(3), beta(3), gamma(1), delta(1), epsilon(1). CF(0) has three main subunits: a, b and c.

The protein resides in the cell inner membrane. Its function is as follows. Produces ATP from ADP in the presence of a proton gradient across the membrane. The gamma chain is believed to be important in regulating ATPase activity and the flow of protons through the CF(0) complex. The protein is ATP synthase gamma chain of Christiangramia forsetii (strain DSM 17595 / CGMCC 1.15422 / KT0803) (Gramella forsetii).